Reading from the N-terminus, the 566-residue chain is CTP synthase (566 aa).

The interval 1–270 (MTKFVFVTGG…DGLICDKLRL (270 aa)) is amidoligase domain. Ser-13 contributes to the CTP binding site. Ser-13 lines the UTP pocket. Residues 14-19 (SLGKGI) and Asp-71 each bind ATP. Residues Asp-71 and Glu-144 each contribute to the Mg(2+) site. CTP-binding positions include 151-153 (DIE), 191-196 (KTKPTQ), and Lys-227. UTP contacts are provided by residues 191 to 196 (KTKPTQ) and Lys-227. One can recognise a Glutamine amidotransferase type-1 domain in the interval 295 to 547 (SIAMVGKYVD…IAATLEQRSA (253 aa)). An L-glutamine-binding site is contributed by Gly-356. Residue Cys-383 is the Nucleophile; for glutamine hydrolysis of the active site. L-glutamine is bound by residues 384–387 (LGMQ), Glu-407, and Arg-473. Residues His-520 and Glu-522 contribute to the active site.

It belongs to the CTP synthase family. Homotetramer.

The catalysed reaction is UTP + L-glutamine + ATP + H2O = CTP + L-glutamate + ADP + phosphate + 2 H(+). It catalyses the reaction L-glutamine + H2O = L-glutamate + NH4(+). It carries out the reaction UTP + NH4(+) + ATP = CTP + ADP + phosphate + 2 H(+). It participates in pyrimidine metabolism; CTP biosynthesis via de novo pathway; CTP from UDP: step 2/2. With respect to regulation, allosterically activated by GTP, when glutamine is the substrate; GTP has no effect on the reaction when ammonia is the substrate. The allosteric effector GTP functions by stabilizing the protein conformation that binds the tetrahedral intermediate(s) formed during glutamine hydrolysis. Inhibited by the product CTP, via allosteric rather than competitive inhibition. Its function is as follows. Catalyzes the ATP-dependent amination of UTP to CTP with either L-glutamine or ammonia as the source of nitrogen. Regulates intracellular CTP levels through interactions with the four ribonucleotide triphosphates. The sequence is that of CTP synthase from Polaromonas naphthalenivorans (strain CJ2).